Reading from the N-terminus, the 341-residue chain is Protein pelota homolog (341 aa).

The protein belongs to the eukaryotic release factor 1 family. Pelota subfamily. Monomer. It depends on a divalent metal cation as a cofactor.

The protein resides in the cytoplasm. May function in recognizing stalled ribosomes, interact with stem-loop structures in stalled mRNA molecules, and effect endonucleolytic cleavage of the mRNA. May play a role in the release non-functional ribosomes and degradation of damaged mRNAs. Has endoribonuclease activity. The chain is Protein pelota homolog from Methanoculleus marisnigri (strain ATCC 35101 / DSM 1498 / JR1).